A 248-amino-acid chain; its full sequence is 4-hydroxy-tetrahydrodipicolinate reductase (248 aa).

NAD(+) contacts are provided by residues 8–13, 75–77, and 99–102; these read GAKGRM, GTT, and ATNM. Catalysis depends on His131, which acts as the Proton donor/acceptor. His132 lines the (S)-2,3,4,5-tetrahydrodipicolinate pocket. The Proton donor role is filled by Lys135. (S)-2,3,4,5-tetrahydrodipicolinate is bound at residue 141 to 142; that stretch reads GT.

The protein belongs to the DapB family.

Its subcellular location is the cytoplasm. The catalysed reaction is (S)-2,3,4,5-tetrahydrodipicolinate + NAD(+) + H2O = (2S,4S)-4-hydroxy-2,3,4,5-tetrahydrodipicolinate + NADH + H(+). It catalyses the reaction (S)-2,3,4,5-tetrahydrodipicolinate + NADP(+) + H2O = (2S,4S)-4-hydroxy-2,3,4,5-tetrahydrodipicolinate + NADPH + H(+). It participates in amino-acid biosynthesis; L-lysine biosynthesis via DAP pathway; (S)-tetrahydrodipicolinate from L-aspartate: step 4/4. Catalyzes the conversion of 4-hydroxy-tetrahydrodipicolinate (HTPA) to tetrahydrodipicolinate. The protein is 4-hydroxy-tetrahydrodipicolinate reductase of Campylobacter jejuni subsp. doylei (strain ATCC BAA-1458 / RM4099 / 269.97).